The chain runs to 852 residues: Protein SEY1 (852 aa).

The Cytoplasmic segment spans residues 1–738 (MNGHFAAVGN…KRSAIGGITQ (738 aa)). Positions 47–283 (GFNYHLISVF…FVGGVFLPEY (237 aa)) constitute a GB1/RHD3-type G domain. A GTP-binding site is contributed by 57–64 (GSQSTGKS). A coiled-coil region spans residues 475 to 500 (QYRLFEKELDEVSARLRKEEMRRLAI). Residues 739–759 (VPLYFYIVLLIFGWNEIVMVL) form a helical membrane-spanning segment. The Lumenal portion of the chain corresponds to 760–762 (RNP). The chain crosses the membrane as a helical span at residues 763-783 (MLFMLLLVMGGGTYVAYTLNL). Residues 784–852 (LGPMMQMANA…AQEVEEDDDI (69 aa)) are Cytoplasmic-facing. A disordered region spans residues 825–852 (RSQDNGIGMDRLDSRGKKAQEVEEDDDI). Residues 834-845 (DRLDSRGKKAQE) show a composition bias toward basic and acidic residues.

Belongs to the TRAFAC class dynamin-like GTPase superfamily. GB1/RHD3 GTPase family. RHD3 subfamily.

Its subcellular location is the endoplasmic reticulum membrane. Its function is as follows. Cooperates with the reticulon proteins and tubule-shaping DP1 family proteins to generate and maintain the structure of the tubular endoplasmic reticulum network. Has GTPase activity, which is required for its function in ER organization. This is Protein SEY1 from Chaetomium globosum (strain ATCC 6205 / CBS 148.51 / DSM 1962 / NBRC 6347 / NRRL 1970) (Soil fungus).